We begin with the raw amino-acid sequence, 147 residues long: Endoribonuclease YbeY (147 aa).

The Zn(2+) site is built by H111, H115, and D121.

This sequence belongs to the endoribonuclease YbeY family. Zn(2+) serves as cofactor.

Its subcellular location is the cytoplasm. Single strand-specific metallo-endoribonuclease involved in late-stage 70S ribosome quality control and in maturation of the 3' terminus of the 16S rRNA. The chain is Endoribonuclease YbeY from Amoebophilus asiaticus (strain 5a2).